The primary structure comprises 662 residues: Bifunctional polymyxin resistance protein ArnA (662 aa).

A formyltransferase ArnAFT region spans residues 1 to 307; sequence MTSKAVVFAY…ELGLVEGARL (307 aa). The active-site Proton donor; for formyltransferase activity is His106. Residues Arg116 and 138–142 contribute to the (6R)-10-formyltetrahydrofolate site; that span reads IERAD. A dehydrogenase ArnADH region spans residues 316-662; that stretch reads RRTRVLILGV…EALREREAQA (347 aa). NAD(+) contacts are provided by residues Asp349 and 370-371; that span reads DI. UDP-alpha-D-glucuronate contacts are provided by residues Ala395, Tyr400, and 434-435; that span reads TS. Residue Glu436 is the Proton acceptor; for decarboxylase activity of the active site. Residues Arg462, Asn493, 527-536, and Tyr614 contribute to the UDP-alpha-D-glucuronate site; that span reads RLVDGGAQKR. Residue Arg620 is the Proton donor; for decarboxylase activity of the active site.

It in the N-terminal section; belongs to the Fmt family. UDP-L-Ara4N formyltransferase subfamily. In the C-terminal section; belongs to the NAD(P)-dependent epimerase/dehydratase family. UDP-glucuronic acid decarboxylase subfamily. Homohexamer, formed by a dimer of trimers.

It catalyses the reaction UDP-alpha-D-glucuronate + NAD(+) = UDP-beta-L-threo-pentopyranos-4-ulose + CO2 + NADH. The enzyme catalyses UDP-4-amino-4-deoxy-beta-L-arabinose + (6R)-10-formyltetrahydrofolate = UDP-4-deoxy-4-formamido-beta-L-arabinose + (6S)-5,6,7,8-tetrahydrofolate + H(+). The protein operates within nucleotide-sugar biosynthesis; UDP-4-deoxy-4-formamido-beta-L-arabinose biosynthesis; UDP-4-deoxy-4-formamido-beta-L-arabinose from UDP-alpha-D-glucuronate: step 1/3. It functions in the pathway nucleotide-sugar biosynthesis; UDP-4-deoxy-4-formamido-beta-L-arabinose biosynthesis; UDP-4-deoxy-4-formamido-beta-L-arabinose from UDP-alpha-D-glucuronate: step 3/3. Its pathway is bacterial outer membrane biogenesis; lipopolysaccharide biosynthesis. In terms of biological role, bifunctional enzyme that catalyzes the oxidative decarboxylation of UDP-glucuronic acid (UDP-GlcUA) to UDP-4-keto-arabinose (UDP-Ara4O) and the addition of a formyl group to UDP-4-amino-4-deoxy-L-arabinose (UDP-L-Ara4N) to form UDP-L-4-formamido-arabinose (UDP-L-Ara4FN). The modified arabinose is attached to lipid A and is required for resistance to polymyxin and cationic antimicrobial peptides. In Pseudomonas aeruginosa (strain UCBPP-PA14), this protein is Bifunctional polymyxin resistance protein ArnA.